Consider the following 157-residue polypeptide: Cyclic pyranopterin monophosphate synthase (157 aa).

Substrate contacts are provided by residues 73–75 (LCH) and 110–111 (ME). D125 is a catalytic residue.

This sequence belongs to the MoaC family. As to quaternary structure, homohexamer; trimer of dimers.

It catalyses the reaction (8S)-3',8-cyclo-7,8-dihydroguanosine 5'-triphosphate = cyclic pyranopterin phosphate + diphosphate. The protein operates within cofactor biosynthesis; molybdopterin biosynthesis. Its function is as follows. Catalyzes the conversion of (8S)-3',8-cyclo-7,8-dihydroguanosine 5'-triphosphate to cyclic pyranopterin monophosphate (cPMP). The protein is Cyclic pyranopterin monophosphate synthase of Pseudomonas fluorescens (strain SBW25).